The sequence spans 83 residues: Beta-defensin 119 (83 aa).

A signal peptide spans 1 to 20; the sequence is MKFLFLFLAILLAMEPVVSG. Intrachain disulfides connect Cys-27–Cys-54, Cys-34–Cys-48, and Cys-38–Cys-55.

This sequence belongs to the beta-defensin family.

The protein localises to the secreted. Has antibacterial activity. This Bos taurus (Bovine) protein is Beta-defensin 119 (DEFB119).